We begin with the raw amino-acid sequence, 203 residues long: ATP-dependent Clp protease proteolytic subunit (203 aa).

Residue serine 100 is the Nucleophile of the active site. Residue histidine 125 is part of the active site.

This sequence belongs to the peptidase S14 family. As to quaternary structure, fourteen ClpP subunits assemble into 2 heptameric rings which stack back to back to give a disk-like structure with a central cavity, resembling the structure of eukaryotic proteasomes.

It localises to the cytoplasm. It catalyses the reaction Hydrolysis of proteins to small peptides in the presence of ATP and magnesium. alpha-casein is the usual test substrate. In the absence of ATP, only oligopeptides shorter than five residues are hydrolyzed (such as succinyl-Leu-Tyr-|-NHMec, and Leu-Tyr-Leu-|-Tyr-Trp, in which cleavage of the -Tyr-|-Leu- and -Tyr-|-Trp bonds also occurs).. Cleaves peptides in various proteins in a process that requires ATP hydrolysis. Has a chymotrypsin-like activity. Plays a major role in the degradation of misfolded proteins. This chain is ATP-dependent Clp protease proteolytic subunit, found in Anaeromyxobacter dehalogenans (strain 2CP-1 / ATCC BAA-258).